A 468-amino-acid polypeptide reads, in one-letter code: Alcohol dehydrogenase (quinone), cytochrome c subunit (468 aa).

A signal peptide spans 1–23; that stretch reads MINRLKVTFSAAAFSLLAGTALA. 3 Cytochrome c domains span residues 31–134, 178–293, and 317–407; these read ALVQ…MHGV, PEIA…KSLP, and TASV…RTSW. Residues Cys45, Cys48, His49, Cys193, Cys196, His197, Cys330, Cys333, and His334 each coordinate heme c.

The alcohol dehydrogenase multicomponent enzyme system is composed of a dehydrogenase subunit I (AdhA) and a cytochrome c subunit II (AdhB). Heme c is required as a cofactor.

Its subcellular location is the cell membrane. The catalysed reaction is ethanol + a ubiquinone = a ubiquinol + acetaldehyde. Its function is as follows. Cytochrome c component of the alcohol dehydrogenase multicomponent enzyme system which is involved in the production of acetic acid and in the ethanol oxidase respiratory chain. Quinohemoprotein alcohol dehydrogenase (ADH) catalyzes the oxidation of ethanol to acetaldehyde by transferring electrons to the ubiquinone embedded in the membrane phospholipids. The electrons transfer from ethanol to membranous ubiquinone occurs from pyrroloquinoline quinone (PQQ) to one heme c in subunit I (AdhA), and finally to two heme c in subunit II (AdhB). Besides ubiquinone reduction, ADH also has a ubiquinol (QH2) oxidation reaction which mediates electron transfer from ubiquinol to the non-energy generating bypass oxidase system. The electrons transfer occurs from ubiquinol (QH2) to the additional heme c within subunit II (AdhB). This is Alcohol dehydrogenase (quinone), cytochrome c subunit from Gluconacetobacter polyoxogenes (Acetobacter polyoxogenes).